A 157-amino-acid chain; its full sequence is Protein Smg (157 aa).

The protein belongs to the Smg family.

In Escherichia coli O6:H1 (strain CFT073 / ATCC 700928 / UPEC), this protein is Protein Smg.